A 410-amino-acid polypeptide reads, in one-letter code: uncharacterized protein (410 aa).

The N-terminal stretch at 1–41 (MVKSFRMKALIAGAAVAAAVSAGAVSDVPAAKVLQPTAAYA) is a signal peptide.

As to quaternary structure, interacts with PcrA, Pdp, YclM, YkvL, YhcQ and YomL. The interaction with PcrA is not essential for cell viability or repair of UV-induced lesions.

The protein localises to the secreted. Its function is as follows. Increases the processivity of the PcrA helicase, but does not bind to DNA. This is an uncharacterized protein from Bacillus subtilis (strain 168).